Here is a 388-residue protein sequence, read N- to C-terminus: Succinate--CoA ligase [ADP-forming] subunit beta (388 aa).

The 237-residue stretch at 9–245 (KALLKKYGVS…KSQENERELK (237 aa)) folds into the ATP-grasp domain. Residues K46, 53–55 (GRG), E100, Y103, and E108 each bind ATP. N200 and D214 together coordinate Mg(2+). Substrate-binding positions include N265 and 322-324 (GIV).

This sequence belongs to the succinate/malate CoA ligase beta subunit family. Heterotetramer of two alpha and two beta subunits. Requires Mg(2+) as cofactor.

The enzyme catalyses succinate + ATP + CoA = succinyl-CoA + ADP + phosphate. It catalyses the reaction GTP + succinate + CoA = succinyl-CoA + GDP + phosphate. The protein operates within carbohydrate metabolism; tricarboxylic acid cycle; succinate from succinyl-CoA (ligase route): step 1/1. Its function is as follows. Succinyl-CoA synthetase functions in the citric acid cycle (TCA), coupling the hydrolysis of succinyl-CoA to the synthesis of either ATP or GTP and thus represents the only step of substrate-level phosphorylation in the TCA. The beta subunit provides nucleotide specificity of the enzyme and binds the substrate succinate, while the binding sites for coenzyme A and phosphate are found in the alpha subunit. In Acinetobacter baylyi (strain ATCC 33305 / BD413 / ADP1), this protein is Succinate--CoA ligase [ADP-forming] subunit beta.